We begin with the raw amino-acid sequence, 28 residues long: leu operon leader peptide (28 aa).

Its function is as follows. Involved in control of the biosynthesis of leucine. In Salmonella typhi, this protein is leu operon leader peptide (leuL).